The chain runs to 118 residues: Succinate dehydrogenase assembly factor 1, mitochondrial (118 aa).

The short motif at 14–16 (LYR) is the LYR motif 1; required for interaction with HSC20 element. An LYR motif 2; not required for interaction with HSC20 motif is present at residues 53-55 (LYR). Residues 53–65 (LYRRGRRQLQLLR) are interaction with SDHB. The tract at residues 68–118 (HATAMGTFVRPRGPAEEPGDATAPGTRLDDGGAPKNSCEDTGARETRSDGR) is disordered. The span at 94–118 (RLDDGGAPKNSCEDTGARETRSDGR) shows a compositional bias: basic and acidic residues.

Belongs to the complex I LYR family. SDHAF1 subfamily. Interacts with SDHB within an SDHA-SDHB subcomplex. Also interacts with the iron-sulfur transfer complex formed by HSC20, HSPA9 and ISCU through direct binding to HSC20. Binding of SDHAF1 to SDHB precedes and is necessary for recruitment of the iron-sulfur transfer complex by SDHAF1.

The protein localises to the mitochondrion matrix. In terms of biological role, plays an essential role in the assembly of succinate dehydrogenase (SDH), an enzyme complex (also referred to as respiratory complex II) that is a component of both the tricarboxylic acid (TCA) cycle and the mitochondrial electron transport chain, and which couples the oxidation of succinate to fumarate with the reduction of ubiquinone (coenzyme Q) to ubiquinol. Promotes maturation of the iron-sulfur protein subunit Sdhb of the SDH catalytic dimer, protecting it from the deleterious effects of oxidants. May act together with SDHAF3. Contributes to iron-sulfur cluster incorporation into SDHB by binding to SDHB and recruiting the iron-sulfur transfer complex formed by HSC20, HSPA9 and ISCU through direct binding to HSC20. This chain is Succinate dehydrogenase assembly factor 1, mitochondrial, found in Mus musculus (Mouse).